Consider the following 239-residue polypeptide: Probable transcriptional regulatory protein RBAM_007230 (239 aa).

Belongs to the TACO1 family. YeeN subfamily.

It localises to the cytoplasm. The protein is Probable transcriptional regulatory protein RBAM_007230 of Bacillus velezensis (strain DSM 23117 / BGSC 10A6 / LMG 26770 / FZB42) (Bacillus amyloliquefaciens subsp. plantarum).